The primary structure comprises 226 residues: 2-C-methyl-D-erythritol 4-phosphate cytidylyltransferase (226 aa).

Belongs to the IspD/TarI cytidylyltransferase family. IspD subfamily.

The enzyme catalyses 2-C-methyl-D-erythritol 4-phosphate + CTP + H(+) = 4-CDP-2-C-methyl-D-erythritol + diphosphate. It participates in isoprenoid biosynthesis; isopentenyl diphosphate biosynthesis via DXP pathway; isopentenyl diphosphate from 1-deoxy-D-xylulose 5-phosphate: step 2/6. Catalyzes the formation of 4-diphosphocytidyl-2-C-methyl-D-erythritol from CTP and 2-C-methyl-D-erythritol 4-phosphate (MEP). This chain is 2-C-methyl-D-erythritol 4-phosphate cytidylyltransferase, found in Rhodococcus opacus (strain B4).